Here is a 507-residue protein sequence, read N- to C-terminus: Bifunctional purine biosynthesis protein PurH (507 aa).

Residues 1-149 form the MGS-like domain; the sequence is MSESKRIKTA…KNYNDVIIVA (149 aa).

This sequence belongs to the PurH family.

It catalyses the reaction (6R)-10-formyltetrahydrofolate + 5-amino-1-(5-phospho-beta-D-ribosyl)imidazole-4-carboxamide = 5-formamido-1-(5-phospho-D-ribosyl)imidazole-4-carboxamide + (6S)-5,6,7,8-tetrahydrofolate. The catalysed reaction is IMP + H2O = 5-formamido-1-(5-phospho-D-ribosyl)imidazole-4-carboxamide. It participates in purine metabolism; IMP biosynthesis via de novo pathway; 5-formamido-1-(5-phospho-D-ribosyl)imidazole-4-carboxamide from 5-amino-1-(5-phospho-D-ribosyl)imidazole-4-carboxamide (10-formyl THF route): step 1/1. Its pathway is purine metabolism; IMP biosynthesis via de novo pathway; IMP from 5-formamido-1-(5-phospho-D-ribosyl)imidazole-4-carboxamide: step 1/1. The sequence is that of Bifunctional purine biosynthesis protein PurH from Bacteroides thetaiotaomicron (strain ATCC 29148 / DSM 2079 / JCM 5827 / CCUG 10774 / NCTC 10582 / VPI-5482 / E50).